We begin with the raw amino-acid sequence, 353 residues long: Photosystem II protein D1 (353 aa).

Threonine 2 is subject to N-acetylthreonine. Threonine 2 is modified (phosphothreonine). 3 consecutive transmembrane segments (helical) span residues 29-46 (YIGWFGVLMIPTLLTATS), 118-133 (HFLLGVACYMGREWEL), and 142-156 (WIAVAYSAPVAAATA). Histidine 118 provides a ligand contact to chlorophyll a. Tyrosine 126 is a pheophytin a binding site. [CaMn4O5] cluster-binding residues include aspartate 170 and glutamate 189. The helical transmembrane segment at 197–218 (FHMLGVAGVFGGSLFSAMHGSL) threads the bilayer. Residue histidine 198 participates in chlorophyll a binding. A quinone contacts are provided by residues histidine 215 and 264–265 (SF). A Fe cation-binding site is contributed by histidine 215. Histidine 272 serves as a coordination point for Fe cation. A helical transmembrane segment spans residues 274–288 (FLAAWPVVGIWFTAL). Positions 332, 333, 342, and 344 each coordinate [CaMn4O5] cluster. Positions 345–353 (ALEVPYLNG) are excised as a propeptide.

Belongs to the reaction center PufL/M/PsbA/D family. In terms of assembly, PSII is composed of 1 copy each of membrane proteins PsbA, PsbB, PsbC, PsbD, PsbE, PsbF, PsbH, PsbI, PsbJ, PsbK, PsbL, PsbM, PsbT, PsbX, PsbY, PsbZ, Psb30/Ycf12, at least 3 peripheral proteins of the oxygen-evolving complex and a large number of cofactors. It forms dimeric complexes. The D1/D2 heterodimer binds P680, chlorophylls that are the primary electron donor of PSII, and subsequent electron acceptors. It shares a non-heme iron and each subunit binds pheophytin, quinone, additional chlorophylls, carotenoids and lipids. D1 provides most of the ligands for the Mn4-Ca-O5 cluster of the oxygen-evolving complex (OEC). There is also a Cl(-1) ion associated with D1 and D2, which is required for oxygen evolution. The PSII complex binds additional chlorophylls, carotenoids and specific lipids. is required as a cofactor. In terms of processing, phosphorylated in both bundle sheath and mesophyll cells, phosphorylation increases when cells are grown under high rather than low light regimes (70 vs 900 umol photons/m-2/s). PSII is subject to light-induced damage, in particular to D1. Damaged protein is degraded by Deg1 and FtsH proteases and replaced. In maize mesophyll cells D1 degradation is less extensive in grana (stacked) vs stroma (unstacked) lamellae, in part due to exclusion of FtsH from the grana. D1 degradation is faster in bundle sheath cells. Post-translationally, tyr-161 forms a radical intermediate that is referred to as redox-active TyrZ, YZ or Y-Z. In terms of processing, C-terminally processed by CTPA; processing is essential to allow assembly of the oxygen-evolving complex and thus photosynthetic growth.

The protein localises to the plastid. The protein resides in the chloroplast thylakoid membrane. It carries out the reaction 2 a plastoquinone + 4 hnu + 2 H2O = 2 a plastoquinol + O2. Photosystem II (PSII) is a light-driven water:plastoquinone oxidoreductase that uses light energy to abstract electrons from H(2)O, generating O(2) and a proton gradient subsequently used for ATP formation. It consists of a core antenna complex that captures photons, and an electron transfer chain that converts photonic excitation into a charge separation. The D1/D2 (PsbA/PsbD) reaction center heterodimer binds P680, the primary electron donor of PSII as well as several subsequent electron acceptors. This Zea mays (Maize) protein is Photosystem II protein D1.